Reading from the N-terminus, the 558-residue chain is Thermosome subunit alpha (558 aa).

The disordered stretch occupies residues 536-558; it reads TEKGKKEGGEGAGAETPGAPSLE. Positions 548–558 are enriched in low complexity; that stretch reads GAETPGAPSLE.

The protein belongs to the TCP-1 chaperonin family. As to quaternary structure, forms a Heterooligomeric complex of two stacked eight-membered rings.

Its function is as follows. Molecular chaperone; binds unfolded polypeptides in vitro, and has a weak ATPase activity. The chain is Thermosome subunit alpha (thsA) from Sulfolobus acidocaldarius (strain ATCC 33909 / DSM 639 / JCM 8929 / NBRC 15157 / NCIMB 11770).